A 120-amino-acid polypeptide reads, in one-letter code: Large ribosomal subunit protein bL20c (120 aa).

The protein belongs to the bacterial ribosomal protein bL20 family.

The protein resides in the plastid. Its function is as follows. Binds directly to 23S ribosomal RNA and is necessary for the in vitro assembly process of the 50S ribosomal subunit. It is not involved in the protein synthesizing functions of that subunit. The sequence is that of Large ribosomal subunit protein bL20c (rpl20) from Cuscuta gronovii (Common dodder).